The following is a 484-amino-acid chain: Threonine synthase-like 2 (484 aa).

Lys-113 is modified (N6-(pyridoxal phosphate)lysine).

The protein belongs to the threonine synthase family. It depends on pyridoxal 5'-phosphate as a cofactor.

It is found in the secreted. Functionally, acts as a catabolic phospho-lyase on both gamma- and beta-phosphorylated substrates. Degrades O-phospho-threonine (PThr) to alpha-ketobutyrate, ammonia and phosphate. Its function is as follows. Potent inducer of osteoblastic production of IL6. May act to exacerbate inflammation and/or bone turnover under inflammatory conditions. This chain is Threonine synthase-like 2 (THNSL2), found in Homo sapiens (Human).